The following is a 262-amino-acid chain: Spindlin-Z (262 aa).

The tract at residues 1-50 (MKTPFGKSPGQRSRADAGHAGVSASMMKKRTSHKKHRNNVGPSKPISQPR) is disordered. Basic residues predominate over residues 27 to 38 (MKKRTSHKKHRN).

Belongs to the SPIN/STSY family. As to expression, expressed in several tissues including testis.

The protein localises to the nucleus. May play a role in mitosis. The chain is Spindlin-Z (SPINZ) from Gallus gallus (Chicken).